Consider the following 683-residue polypeptide: Cyclic nucleotide-gated channel alpha-1 (683 aa).

Over 1-160 (MKTNIINTWH…PSGNMYYNWL (160 aa)) the chain is Cytoplasmic. The segment at 34 to 144 (ACSSFSDNDN…PKEKKEEEKK (111 aa)) is disordered. Residues 105–144 (SKADDKKESKKDPEKKKKKEKEKEKKKEEKPKEKKEEEKK) are compositionally biased toward basic and acidic residues. Residues 161-182 (FCITLPVMYNWTMIIARACFDE) traverse the membrane as a helical segment. Topologically, residues 183-192 (LQSDYLEYWL) are extracellular. Residues 193–213 (IFDYVSDVVYLADMFVRTRTG) form a helical membrane-spanning segment. Residues 214–238 (YLEQGLLVKDELKLIEKYKANLQFK) lie on the Cytoplasmic side of the membrane. The helical transmembrane segment at 239 to 257 (LDVLSVIPTDLLYFKFGWN) threads the bilayer. At 258–262 (YPEIR) the chain is on the extracellular side. A helical membrane pass occupies residues 263–281 (LNRLLRISRMFEFFQRTET). Over 282–288 (RTNYPNI) the chain is Cytoplasmic. An ion conduction pathway region spans residues 286 to 394 (PNIFRISNLV…GNIGSMISNM (109 aa)). Residues 289–312 (FRISNLVMYIVIIIHWNACVYYSI) form a helical membrane-spanning segment. Residues 313–335 (SKAIGFGNDTWVYPDVNDPEFGR) are Extracellular-facing. The N-linked (GlcNAc...) asparagine glycan is linked to Asn320. The next 2 helical transmembrane spans lie at 336–370 (LARK…VFVV) and 371–395 (VDFL…SNMN). The interval 353–356 (TIGE) is selectivity filter. Residues 396–472 (AARAEFQSRV…DTLKKVRIFA (77 aa)) are C-linker. The Cytoplasmic segment spans residues 396–683 (AARAEFQSRV…ESEPTESLQG (288 aa)). The segment at 476 to 596 (AGLLVELVLK…EEKGRQILMK (121 aa)) is cyclic nucleotide-binding domain. Residues Gly536, Ser539, Arg552, and Thr553 each contribute to the 3',5'-cyclic GMP site. 3',5'-cyclic AMP contacts are provided by Arg552 and Thr553. Residues 614–668 (LEEKVTRMEGSVDLLQTRFARILAEYESMQQKLKQRLTKVEKFLKPLIETEFSAL) are a coiled coil.

The protein belongs to the cyclic nucleotide-gated cation channel (TC 1.A.1.5) family. CNGA1 subfamily. As to quaternary structure, forms heterotetrameric channels composed of CNGA1 and CNGB1 subunits with 3:1 stoichiometry. May also form cyclic nucleotide-activated homotetrameric channels, that are efficiently activated by saturating cGMP, but poorly activated by saturating cAMP compared to the heterotetramer with CNGB1. The channel binds Ca(2+)-bound CALM1 via CaM1 and CaM2 regions of the CNGB1 subunit; this interaction modulates the affinity of the channel for cNMPs in response to intracellular Ca(2+) levels. As to expression, rod cells in the retina.

It is found in the cell membrane. The enzyme catalyses Ca(2+)(in) = Ca(2+)(out). The catalysed reaction is Na(+)(in) = Na(+)(out). It carries out the reaction K(+)(in) = K(+)(out). It catalyses the reaction NH4(+)(in) = NH4(+)(out). The enzyme catalyses Rb(+)(in) = Rb(+)(out). The catalysed reaction is Li(+)(in) = Li(+)(out). It carries out the reaction Cs(+)(in) = Cs(+)(out). Pore-forming subunit of the rod cyclic nucleotide-gated channel. Mediates rod photoresponses at dim light converting transient changes in intracellular cGMP levels into electrical signals. In the dark, cGMP levels are high and keep the channel open enabling a steady inward current carried by Na(+) and Ca(2+) ions that leads to membrane depolarization and neurotransmitter release from synaptic terminals. Upon photon absorption cGMP levels decline leading to channel closure and membrane hyperpolarization that ultimately slows neurotransmitter release and signals the presence of light, the end point of the phototransduction cascade. Conducts cGMP- and cAMP-gated ion currents, with permeability for monovalent and divalent cations. The selectivity for Ca(2+) over Na(+) increases with cGMP concentrations, whereas the selectivity among monovalent ions is independent of the cGMP levels. This Rattus norvegicus (Rat) protein is Cyclic nucleotide-gated channel alpha-1.